A 371-amino-acid polypeptide reads, in one-letter code: Dual-specificity RNA methyltransferase RlmN (371 aa).

The active-site Proton acceptor is the Glu-86. One can recognise a Radical SAM core domain in the interval 105-338 (RHARYTICVS…CTIRQSKGLD (234 aa)). An intrachain disulfide couples Cys-112 to Cys-343. Positions 119, 123, and 126 each coordinate [4Fe-4S] cluster. Residues 169-170 (GE), Ser-201, 224-226 (SLH), and Asn-300 contribute to the S-adenosyl-L-methionine site. The active-site S-methylcysteine intermediate is Cys-343. Over residues 348–363 (QRSQNLSPSNNNTSKP) the composition is skewed to polar residues. The segment at 348–371 (QRSQNLSPSNNNTSKPSDIKKSES) is disordered.

This sequence belongs to the radical SAM superfamily. RlmN family. Requires [4Fe-4S] cluster as cofactor.

Its subcellular location is the cytoplasm. The catalysed reaction is adenosine(2503) in 23S rRNA + 2 reduced [2Fe-2S]-[ferredoxin] + 2 S-adenosyl-L-methionine = 2-methyladenosine(2503) in 23S rRNA + 5'-deoxyadenosine + L-methionine + 2 oxidized [2Fe-2S]-[ferredoxin] + S-adenosyl-L-homocysteine. The enzyme catalyses adenosine(37) in tRNA + 2 reduced [2Fe-2S]-[ferredoxin] + 2 S-adenosyl-L-methionine = 2-methyladenosine(37) in tRNA + 5'-deoxyadenosine + L-methionine + 2 oxidized [2Fe-2S]-[ferredoxin] + S-adenosyl-L-homocysteine. Its function is as follows. Specifically methylates position 2 of adenine 2503 in 23S rRNA and position 2 of adenine 37 in tRNAs. m2A2503 modification seems to play a crucial role in the proofreading step occurring at the peptidyl transferase center and thus would serve to optimize ribosomal fidelity. This is Dual-specificity RNA methyltransferase RlmN from Campylobacter curvus (strain 525.92).